A 457-amino-acid chain; its full sequence is UPF0328 protein ECU05_0030 (457 aa).

Disordered stretches follow at residues 1–112 (MPRP…PTAT) and 157–183 (VKSQSVSHRAPITYQPPRPTTTSNPRI). Residues 74–94 (HTEGCHTHEANPEPNTKHTET) are compositionally biased toward basic and acidic residues. Residues 102-112 (CPPPHPGPTAT) show a composition bias toward pro residues.

It belongs to the UPF0328 family.

The chain is UPF0328 protein ECU05_0030 from Encephalitozoon cuniculi (strain GB-M1) (Microsporidian parasite).